The sequence spans 539 residues: T-complex protein 1 subunit zeta (539 aa).

It belongs to the TCP-1 chaperonin family. As to quaternary structure, heterooligomeric complex of about 850 to 900 kDa that forms two stacked rings, 12 to 16 nm in diameter.

Its subcellular location is the cytoplasm. Its function is as follows. Molecular chaperone; assists the folding of proteins upon ATP hydrolysis. Known to play a role, in vitro, in the folding of actin and tubulin. The sequence is that of T-complex protein 1 subunit zeta (cct-6) from Caenorhabditis elegans.